The primary structure comprises 362 residues: Carbamoyl phosphate synthase small chain (362 aa).

The segment at 1-172 is CPSase; that stretch reads MKAFLVLDNG…SKYIFGTHTG (172 aa). Residues S45, G224, and G226 each contribute to the L-glutamine site. The 187-residue stretch at 176-362 folds into the Glutamine amidotransferase type-1 domain; it reads KLAVYDYGVK…YDLVEKTKKG (187 aa). Residue C252 is the Nucleophile of the active site. L-glutamine contacts are provided by L253, Q256, N294, G296, and F297. Active-site residues include H335 and E337.

The protein belongs to the CarA family. As to quaternary structure, composed of two chains; the small (or glutamine) chain promotes the hydrolysis of glutamine to ammonia, which is used by the large (or ammonia) chain to synthesize carbamoyl phosphate. Tetramer of heterodimers (alpha,beta)4.

The enzyme catalyses hydrogencarbonate + L-glutamine + 2 ATP + H2O = carbamoyl phosphate + L-glutamate + 2 ADP + phosphate + 2 H(+). It carries out the reaction L-glutamine + H2O = L-glutamate + NH4(+). The protein operates within amino-acid biosynthesis; L-arginine biosynthesis; carbamoyl phosphate from bicarbonate: step 1/1. It functions in the pathway pyrimidine metabolism; UMP biosynthesis via de novo pathway; (S)-dihydroorotate from bicarbonate: step 1/3. In terms of biological role, small subunit of the glutamine-dependent carbamoyl phosphate synthetase (CPSase). CPSase catalyzes the formation of carbamoyl phosphate from the ammonia moiety of glutamine, carbonate, and phosphate donated by ATP, constituting the first step of 2 biosynthetic pathways, one leading to arginine and/or urea and the other to pyrimidine nucleotides. The small subunit (glutamine amidotransferase) binds and cleaves glutamine to supply the large subunit with the substrate ammonia. This Leptospira interrogans serogroup Icterohaemorrhagiae serovar Lai (strain 56601) protein is Carbamoyl phosphate synthase small chain.